We begin with the raw amino-acid sequence, 717 residues long: Glutamate--cysteine ligase (717 aa).

Residues 484–576 (SKTTEQRAAK…TDSDHTDTDD (93 aa)) form a disordered region. Composition is skewed to low complexity over residues 492–518 (AKAQ…NGNG) and 551–567 (GTTN…SNGT).

Belongs to the glutamate--cysteine ligase type 3 family.

The enzyme catalyses L-cysteine + L-glutamate + ATP = gamma-L-glutamyl-L-cysteine + ADP + phosphate + H(+). The catalysed reaction is (2S)-2-aminobutanoate + L-glutamate + ATP = gamma-L-glutamyl-(2S)-2-aminobutanoate + ADP + phosphate + H(+). Its pathway is sulfur metabolism; glutathione biosynthesis; glutathione from L-cysteine and L-glutamate: step 1/2. Functionally, catalyzes the ATP-dependent ligation of L-glutamate and L-cysteine and participates in the first and rate-limiting step in glutathione biosynthesis. The sequence is that of Glutamate--cysteine ligase from Drosophila melanogaster (Fruit fly).